We begin with the raw amino-acid sequence, 440 residues long: Chromosomal replication initiator protein DnaA (440 aa).

The interval 1–69 (MKERILQEIK…VKVVLGNDAT (69 aa)) is domain I, interacts with DnaA modulators. Positions 69–96 (TFEITYEAFEPHSSYSEPLVKKRAVLLT) are domain II. Positions 97-313 (PLNPDYTFEN…GAIIKLLVYK (217 aa)) are domain III, AAA+ region. 4 residues coordinate ATP: G140, G142, K143, and T144. A domain IV, binds dsDNA region spans residues 314–440 (ETTGKEVDLK…GEISRRALSG (127 aa)).

This sequence belongs to the DnaA family. In terms of assembly, oligomerizes as a right-handed, spiral filament on DNA at oriC.

It is found in the cytoplasm. In terms of biological role, plays an essential role in the initiation and regulation of chromosomal replication. ATP-DnaA binds to the origin of replication (oriC) to initiate formation of the DNA replication initiation complex once per cell cycle. Binds the DnaA box (a 9 base pair repeat at the origin) and separates the double-stranded (ds)DNA. Forms a right-handed helical filament on oriC DNA; dsDNA binds to the exterior of the filament while single-stranded (ss)DNA is stabiized in the filament's interior. The ATP-DnaA-oriC complex binds and stabilizes one strand of the AT-rich DNA unwinding element (DUE), permitting loading of DNA polymerase. After initiation quickly degrades to an ADP-DnaA complex that is not apt for DNA replication. Binds acidic phospholipids. This is Chromosomal replication initiator protein DnaA from Thermotoga sp. (strain RQ2).